Here is a 71-residue protein sequence, read N- to C-terminus: Large ribosomal subunit protein uL29 (71 aa).

This sequence belongs to the universal ribosomal protein uL29 family.

In Aeropyrum pernix (strain ATCC 700893 / DSM 11879 / JCM 9820 / NBRC 100138 / K1), this protein is Large ribosomal subunit protein uL29 (rpl29).